The following is a 97-amino-acid chain: High mobility group protein homolog NHP1 (97 aa).

Residues 1–24 form a disordered region; sequence MAGASDRTGVRRPRKAKKDPNAPK. Residues 23–93 constitute a DNA-binding region (HMG box); sequence PKRALSSYMF…RYEREKAEYA (71 aa).

It localises to the nucleus. The chain is High mobility group protein homolog NHP1 from Babesia bovis.